We begin with the raw amino-acid sequence, 101 residues long: Nucleoid-associated protein Acid345_1974 (101 aa).

Belongs to the YbaB/EbfC family. As to quaternary structure, homodimer.

It localises to the cytoplasm. The protein localises to the nucleoid. Its function is as follows. Binds to DNA and alters its conformation. May be involved in regulation of gene expression, nucleoid organization and DNA protection. This is Nucleoid-associated protein Acid345_1974 from Koribacter versatilis (strain Ellin345).